The following is a 190-amino-acid chain: ATP synthase subunit delta (190 aa).

The protein belongs to the ATPase delta chain family. In terms of assembly, F-type ATPases have 2 components, F(1) - the catalytic core - and F(0) - the membrane proton channel. F(1) has five subunits: alpha(3), beta(3), gamma(1), delta(1), epsilon(1). F(0) has three main subunits: a(1), b(2) and c(10-14). The alpha and beta chains form an alternating ring which encloses part of the gamma chain. F(1) is attached to F(0) by a central stalk formed by the gamma and epsilon chains, while a peripheral stalk is formed by the delta and b chains.

Its subcellular location is the cell inner membrane. F(1)F(0) ATP synthase produces ATP from ADP in the presence of a proton or sodium gradient. F-type ATPases consist of two structural domains, F(1) containing the extramembraneous catalytic core and F(0) containing the membrane proton channel, linked together by a central stalk and a peripheral stalk. During catalysis, ATP synthesis in the catalytic domain of F(1) is coupled via a rotary mechanism of the central stalk subunits to proton translocation. In terms of biological role, this protein is part of the stalk that links CF(0) to CF(1). It either transmits conformational changes from CF(0) to CF(1) or is implicated in proton conduction. This is ATP synthase subunit delta from Salinibacter ruber (strain DSM 13855 / M31).